Consider the following 394-residue polypeptide: Elongation factor Tu (394 aa).

Residues 10 to 204 (KPHVNVGTIG…ALDSYIPEPE (195 aa)) form the tr-type G domain. Positions 19-26 (GHVDHGKT) are G1. GTP is bound at residue 19–26 (GHVDHGKT). T26 lines the Mg(2+) pocket. The tract at residues 60 to 64 (GITIA) is G2. The interval 81 to 84 (DCPG) is G3. GTP is bound by residues 81-85 (DCPGH) and 136-139 (NKCD). A G4 region spans residues 136–139 (NKCD). The segment at 174–176 (SAL) is G5.

Belongs to the TRAFAC class translation factor GTPase superfamily. Classic translation factor GTPase family. EF-Tu/EF-1A subfamily. As to quaternary structure, monomer.

The protein localises to the cytoplasm. The catalysed reaction is GTP + H2O = GDP + phosphate + H(+). In terms of biological role, GTP hydrolase that promotes the GTP-dependent binding of aminoacyl-tRNA to the A-site of ribosomes during protein biosynthesis. The sequence is that of Elongation factor Tu from Vibrio campbellii (strain ATCC BAA-1116).